Reading from the N-terminus, the 370-residue chain is 3-isopropylmalate dehydrogenase (370 aa).

Residue 77 to 90 (GPKWDSVPYEVRPE) coordinates NAD(+). Residues Arg-97, Arg-107, Arg-135, and Asp-226 each contribute to the substrate site. The Mg(2+) site is built by Asp-226, Asp-250, and Asp-254. 290–302 (GSAPDIAGQGLAN) contacts NAD(+).

Belongs to the isocitrate and isopropylmalate dehydrogenases family. LeuB type 1 subfamily. As to quaternary structure, homodimer. Mg(2+) serves as cofactor. It depends on Mn(2+) as a cofactor.

It is found in the cytoplasm. It carries out the reaction (2R,3S)-3-isopropylmalate + NAD(+) = 4-methyl-2-oxopentanoate + CO2 + NADH. Its pathway is amino-acid biosynthesis; L-leucine biosynthesis; L-leucine from 3-methyl-2-oxobutanoate: step 3/4. Functionally, catalyzes the oxidation of 3-carboxy-2-hydroxy-4-methylpentanoate (3-isopropylmalate) to 3-carboxy-4-methyl-2-oxopentanoate. The product decarboxylates to 4-methyl-2 oxopentanoate. This chain is 3-isopropylmalate dehydrogenase, found in Nitrobacter winogradskyi (strain ATCC 25391 / DSM 10237 / CIP 104748 / NCIMB 11846 / Nb-255).